Reading from the N-terminus, the 422-residue chain is Probable biofilm formation methyltransferase WspC (422 aa).

In terms of domain architecture, CheR-type methyltransferase spans 1 to 264 (MNDRFERLLK…LSFVFRRTSE (264 aa)). S-adenosyl-L-methionine-binding positions include Thr67, Arg71, Glu108, Asp132, 186-187 (NL), and 205-206 (RN). A disordered region spans residues 289–316 (ASIRPSPPPPAKPRQRLSSLVPPASGQP). A TPR repeat occupies 354–387 (ATVFYWLGLLSDVAGQEQEAQDFYRKALYLEPQH).

As to quaternary structure, monomer.

In terms of biological role, involved in biofilm formation. This Pseudomonas aeruginosa (strain ATCC 15692 / DSM 22644 / CIP 104116 / JCM 14847 / LMG 12228 / 1C / PRS 101 / PAO1) protein is Probable biofilm formation methyltransferase WspC (wspC).